A 91-amino-acid chain; its full sequence is Small ribosomal subunit protein uS15 (91 aa).

Belongs to the universal ribosomal protein uS15 family. In terms of assembly, part of the 30S ribosomal subunit. Forms a bridge to the 50S subunit in the 70S ribosome, contacting the 23S rRNA.

Its function is as follows. One of the primary rRNA binding proteins, it binds directly to 16S rRNA where it helps nucleate assembly of the platform of the 30S subunit by binding and bridging several RNA helices of the 16S rRNA. In terms of biological role, forms an intersubunit bridge (bridge B4) with the 23S rRNA of the 50S subunit in the ribosome. In Legionella pneumophila (strain Corby), this protein is Small ribosomal subunit protein uS15.